Here is a 281-residue protein sequence, read N- to C-terminus: NADPH-dependent 7-cyano-7-deazaguanine reductase (281 aa).

87–89 (IES) provides a ligand contact to substrate. An NADPH-binding site is contributed by 89-90 (SK). Cysteine 188 acts as the Thioimide intermediate in catalysis. The active-site Proton donor is aspartate 195. Position 227–228 (227–228 (HE)) interacts with substrate. 256-257 (RG) lines the NADPH pocket. The segment at 261–281 (INPYRSTEQDKPAHNNRMARQ) is disordered.

Belongs to the GTP cyclohydrolase I family. QueF type 2 subfamily. Homodimer.

The protein localises to the cytoplasm. The catalysed reaction is 7-aminomethyl-7-carbaguanine + 2 NADP(+) = 7-cyano-7-deazaguanine + 2 NADPH + 3 H(+). It functions in the pathway tRNA modification; tRNA-queuosine biosynthesis. Functionally, catalyzes the NADPH-dependent reduction of 7-cyano-7-deazaguanine (preQ0) to 7-aminomethyl-7-deazaguanine (preQ1). This chain is NADPH-dependent 7-cyano-7-deazaguanine reductase, found in Vibrio campbellii (strain ATCC BAA-1116).